The following is a 336-amino-acid chain: D-alanine--D-alanine ligase (336 aa).

An ATP-grasp domain is found at 124–330; the sequence is KMWFSALGVP…FTEYLIDVIG (207 aa). An ATP-binding site is contributed by 154–209; it reads AFDNWGSVFVKAASQGSSVGCYKVDVKANIANVLKDAFSYAPYVVVEQTIHARELE. D284, E297, and N299 together coordinate Mg(2+).

It belongs to the D-alanine--D-alanine ligase family. Mg(2+) serves as cofactor. It depends on Mn(2+) as a cofactor.

It is found in the cytoplasm. The catalysed reaction is 2 D-alanine + ATP = D-alanyl-D-alanine + ADP + phosphate + H(+). It functions in the pathway cell wall biogenesis; peptidoglycan biosynthesis. Cell wall formation. The protein is D-alanine--D-alanine ligase of Shewanella frigidimarina (strain NCIMB 400).